The following is a 274-amino-acid chain: Thiamine kinase (274 aa).

It belongs to the thiamine kinase family.

It catalyses the reaction thiamine + ATP = thiamine phosphate + ADP + H(+). The protein operates within cofactor biosynthesis; thiamine diphosphate biosynthesis; thiamine phosphate from thiamine: step 1/1. Catalyzes the ATP-dependent phosphorylation of thiamine to thiamine phosphate. Is involved in thiamine salvage. This is Thiamine kinase from Escherichia coli (strain SMS-3-5 / SECEC).